The following is a 325-amino-acid chain: Elongation factor P--(R)-beta-lysine ligase (325 aa).

76–78 (SPE) is a substrate binding site. Residues 100 to 102 (RNE) and Asn109 contribute to the ATP site. Tyr118 contacts substrate. 244–245 (EL) lines the ATP pocket. Glu251 contacts substrate. Residue Gly300 coordinates ATP.

This sequence belongs to the class-II aminoacyl-tRNA synthetase family. EpmA subfamily. As to quaternary structure, homodimer.

It carries out the reaction D-beta-lysine + L-lysyl-[protein] + ATP = N(6)-((3R)-3,6-diaminohexanoyl)-L-lysyl-[protein] + AMP + diphosphate + H(+). Functionally, with EpmB is involved in the beta-lysylation step of the post-translational modification of translation elongation factor P (EF-P). Catalyzes the ATP-dependent activation of (R)-beta-lysine produced by EpmB, forming a lysyl-adenylate, from which the beta-lysyl moiety is then transferred to the epsilon-amino group of a conserved specific lysine residue in EF-P. The sequence is that of Elongation factor P--(R)-beta-lysine ligase from Hamiltonella defensa subsp. Acyrthosiphon pisum (strain 5AT).